The chain runs to 440 residues: Xylose isomerase (440 aa).

Active-site residues include His-101 and Asp-104. Residues Glu-232, Glu-268, His-271, Asp-296, Asp-307, Asp-309, and Asp-339 each contribute to the Mg(2+) site.

It belongs to the xylose isomerase family. In terms of assembly, homotetramer. The cofactor is Mg(2+).

The protein resides in the cytoplasm. The catalysed reaction is alpha-D-xylose = alpha-D-xylulofuranose. The polypeptide is Xylose isomerase (Escherichia fergusonii (strain ATCC 35469 / DSM 13698 / CCUG 18766 / IAM 14443 / JCM 21226 / LMG 7866 / NBRC 102419 / NCTC 12128 / CDC 0568-73)).